The chain runs to 113 residues: Putative membrane protein insertion efficiency factor (113 aa).

The protein belongs to the UPF0161 family.

The protein resides in the cell inner membrane. In terms of biological role, could be involved in insertion of integral membrane proteins into the membrane. This chain is Putative membrane protein insertion efficiency factor, found in Campylobacter concisus (strain 13826).